A 282-amino-acid chain; its full sequence is tRNA uridine(34) hydroxylase (282 aa).

Positions 128–222 (EGRPVVMLDT…YFEEVGGDHY (95 aa)) constitute a Rhodanese domain. The Cysteine persulfide intermediate role is filled by C182.

This sequence belongs to the TrhO family.

It carries out the reaction uridine(34) in tRNA + AH2 + O2 = 5-hydroxyuridine(34) in tRNA + A + H2O. In terms of biological role, catalyzes oxygen-dependent 5-hydroxyuridine (ho5U) modification at position 34 in tRNAs. The sequence is that of tRNA uridine(34) hydroxylase from Cupriavidus pinatubonensis (strain JMP 134 / LMG 1197) (Cupriavidus necator (strain JMP 134)).